The sequence spans 632 residues: tRNA uridine 5-carboxymethylaminomethyl modification enzyme MnmG (632 aa).

An FAD-binding site is contributed by 13–18 (GGGHAG). 274–288 (GPRYCPSIEDKVMRF) serves as a coordination point for NAD(+).

It belongs to the MnmG family. As to quaternary structure, homodimer. Heterotetramer of two MnmE and two MnmG subunits. The cofactor is FAD.

The protein localises to the cytoplasm. In terms of biological role, NAD-binding protein involved in the addition of a carboxymethylaminomethyl (cmnm) group at the wobble position (U34) of certain tRNAs, forming tRNA-cmnm(5)s(2)U34. This Dichelobacter nodosus (strain VCS1703A) protein is tRNA uridine 5-carboxymethylaminomethyl modification enzyme MnmG.